A 398-amino-acid chain; its full sequence is Probable aminomethyltransferase (398 aa).

It belongs to the GcvT family. As to quaternary structure, the glycine cleavage system is composed of four proteins: P, T, L and H.

The enzyme catalyses N(6)-[(R)-S(8)-aminomethyldihydrolipoyl]-L-lysyl-[protein] + (6S)-5,6,7,8-tetrahydrofolate = N(6)-[(R)-dihydrolipoyl]-L-lysyl-[protein] + (6R)-5,10-methylene-5,6,7,8-tetrahydrofolate + NH4(+). Its function is as follows. The glycine cleavage system catalyzes the degradation of glycine. The sequence is that of Probable aminomethyltransferase from Pyrococcus horikoshii (strain ATCC 700860 / DSM 12428 / JCM 9974 / NBRC 100139 / OT-3).